A 208-amino-acid chain; its full sequence is 3-demethoxyubiquinol 3-hydroxylase (208 aa).

Positions 57, 87, 90, 139, 171, and 174 each coordinate Fe cation.

It belongs to the COQ7 family. The cofactor is Fe cation.

The protein localises to the cell membrane. The enzyme catalyses a 5-methoxy-2-methyl-3-(all-trans-polyprenyl)benzene-1,4-diol + AH2 + O2 = a 3-demethylubiquinol + A + H2O. It participates in cofactor biosynthesis; ubiquinone biosynthesis. Functionally, catalyzes the hydroxylation of 2-nonaprenyl-3-methyl-6-methoxy-1,4-benzoquinol during ubiquinone biosynthesis. The polypeptide is 3-demethoxyubiquinol 3-hydroxylase (Burkholderia cenocepacia (strain HI2424)).